We begin with the raw amino-acid sequence, 616 residues long: Male-specific lethal 1 homolog (616 aa).

Positions 1 to 116 (MTMRSAVFKA…PPATKQAGIG (116 aa)) are disordered. Phosphoserine is present on serine 66. The segment covering 81-91 (GLLLPAGAAPG) has biased composition (low complexity). Serine 127 carries the phosphoserine modification. Residues 152 to 218 (TPWAGDKGGA…LGGGGGSGAS (67 aa)) are disordered. Residues 153–171 (PWAGDKGGAAPPAATASDP) show a composition bias toward low complexity. Pro residues predominate over residues 172-186 (AGPPPLPLPGPPPLA). Residues 187-196 (PTATAGTLAA) are compositionally biased toward low complexity. Position 207 is a phosphoserine (serine 207). Positions 215–284 (SGASSQAACL…RDNEKERHKL (70 aa)) form a coiled coil. Residues 225–239 (KQILLLQLDLIEQQQ) form an interaction with MSL2 region. A Glycyl lysine isopeptide (Lys-Gly) (interchain with G-Cter in SUMO2) cross-link involves residue lysine 303. The interval 306–422 (RQPELCETSQ…PKEKAFSSEM (117 aa)) is disordered. The Nuclear localization signal motif lies at 319-348 (SKPFSCGRSGKGHKRKTPFGNTERKTPVKK). Lysine 355 is subject to N6-acetyllysine. 2 positions are modified to phosphothreonine: threonine 358 and threonine 360. Serine 364 bears the Phosphoserine mark. Residues lysine 367 and lysine 380 each participate in a glycyl lysine isopeptide (Lys-Gly) (interchain with G-Cter in SUMO2) cross-link. The segment covering 378–394 (VCKRELRSQETPEKPRS) has biased composition (basic and acidic residues). Serine 385 carries the post-translational modification Phosphoserine. Threonine 388 bears the Phosphothreonine mark. The residue at position 395 (serine 395) is a Phosphoserine. The segment covering 395–409 (SVDTPPRLSTPQKGP) has biased composition (polar residues). Residues threonine 398 and threonine 404 each carry the phosphothreonine modification. Residues serine 444, serine 452, and serine 484 each carry the phosphoserine modification. Residues 474–593 (VLAVPSWRDH…LAPQNFELPW (120 aa)) enclose the PEHE domain. The segment at 498-516 (ENLDDSVFSKRHAKLELDE) is interaction with KAT8 HAT domain. Positions 507-521 (KRHAKLELDEKRRKR) match the Bipartite nuclear localization signal motif. Residues 552–593 (EVTSFFPEPDDVESLLITPFLPVVAFGRPLPKLAPQNFELPW) form an interaction with MSL3 MRG domain region.

The protein belongs to the msl-1 family. As to quaternary structure, component of a multisubunit histone acetyltransferase complex (MSL) at least composed of the KAT8/MOF/MYST1, MSL1/hampin, MSL2 and MSL3. Interacts (via PEHE domain) with KAT8 (via HAT domain) and MSL3 (via MRG domain); both interactions are direct. Directly interacts with MSL2 via its coiled coil domain. Directly interacts with NUPR1. Interacts with TP53BP1; this interaction may be required for MSL1 DNA repair activity, but not for histone acetyltransferase activity. Forms a MSL heterotetrameric core with MSL2. Isoform 1 and isoform 3 interact with TTC4. Isoform 1 interacts with ECM2 and PIHD1. In terms of processing, sumoylated with SUMO1. Isoform 3 and isoform 5 are testis-specific. Isoform 1 and isoform 4 are ubiquitously expressed. Isoform 2 is expressed at low levels in the testis and brain.

It is found in the nucleus. The protein resides in the nucleus speckle. The protein localises to the nucleoplasm. In terms of biological role, non-catalytic component of the MSL histone acetyltransferase complex, a multiprotein complex that mediates the majority of histone H4 acetylation at 'Lys-16' (H4K16ac), an epigenetic mark that prevents chromatin compaction. The MSL complex is required for chromosome stability and genome integrity by maintaining homeostatic levels of H4K16ac. The MSL complex is also involved in gene dosage by promoting up-regulation of genes expressed by the X chromosome. X up-regulation is required to compensate for autosomal biallelic expression. The MSL complex also participates in gene dosage compensation by promoting expression of Tsix non-coding RNA. Within the MSL complex, acts as a scaffold to tether MSL3 and KAT8 together for enzymatic activity regulation. Greatly enhances MSL2 E3 ubiquitin ligase activity, promoting monoubiquitination of histone H2B at 'Lys-34' (H2BK34Ub). This modification in turn stimulates histone H3 methylation at 'Lys-4' (H3K4me) and 'Lys-79' (H3K79me) and leads to gene activation, including that of HOXA9 and MEIS1. This chain is Male-specific lethal 1 homolog, found in Mus musculus (Mouse).